A 279-amino-acid chain; its full sequence is Succinate dehydrogenase [ubiquinone] iron-sulfur subunit 1, mitochondrial (279 aa).

A mitochondrion-targeting transit peptide spans 1–28 (MASGLIGRLVGTKPSKLATAARLIPARW). In terms of domain architecture, 2Fe-2S ferredoxin-type spans 52–141 (FQIYRWNPDN…ETTITPLPHM (90 aa)). Positions 102, 107, and 122 each coordinate [2Fe-2S] cluster. The 4Fe-4S ferredoxin-type domain maps to 184–214 (DRAKLDGMYECILCACCSTSCPSYWWNPESY). Residues cysteine 194, cysteine 197, and cysteine 200 each contribute to the [4Fe-4S] cluster site. Cysteine 204 is a [3Fe-4S] cluster binding site. Tryptophan 209 contributes to the a ubiquinone binding site. Residues cysteine 251 and cysteine 257 each coordinate [3Fe-4S] cluster. A [4Fe-4S] cluster-binding site is contributed by cysteine 261.

This sequence belongs to the succinate dehydrogenase/fumarate reductase iron-sulfur protein family. In terms of assembly, component of complex II composed of eight subunits in plants: four classical SDH subunits SDH1, SDH2, SDH3 and SDH4 (a flavoprotein (FP), an iron-sulfur protein (IP), and a cytochrome b composed of a large and a small subunit.), as well as four subunits unknown in mitochondria from bacteria and heterotrophic eukaryotes. [2Fe-2S] cluster is required as a cofactor. It depends on [3Fe-4S] cluster as a cofactor. Requires [4Fe-4S] cluster as cofactor. As to expression, ubiquitous. Preferentially expressed in flowers and inflorescences.

Its subcellular location is the mitochondrion inner membrane. It catalyses the reaction a quinone + succinate = fumarate + a quinol. It participates in carbohydrate metabolism; tricarboxylic acid cycle; fumarate from succinate (eukaryal route): step 1/1. Iron-sulfur protein (IP) subunit of succinate dehydrogenase (SDH) that is involved in complex II of the mitochondrial electron transport chain and is responsible for transferring electrons from succinate to ubiquinone (coenzyme Q). This Arabidopsis thaliana (Mouse-ear cress) protein is Succinate dehydrogenase [ubiquinone] iron-sulfur subunit 1, mitochondrial (SDH2-1).